Here is a 530-residue protein sequence, read N- to C-terminus: Ubiquitin carboxyl-terminal hydrolase 17-like protein 24 (530 aa).

One can recognise a USP domain in the interval 80-375 (AGLQNMGNTC…QAYVLFYIQK (296 aa)). Cysteine 89 acts as the Nucleophile in catalysis. Histidine 334 acts as the Proton acceptor in catalysis. 2 stretches are compositionally biased toward basic and acidic residues: residues 382-392 (SESVSRGREPR) and 398-412 (DTDRRATQGELKRDH). Disordered regions lie at residues 382–412 (SESVSRGREPRALGAEDTDRRATQGELKRDH) and 477–530 (NHHP…LVCQ). A compositionally biased stretch (polar residues) spans 493 to 505 (TPTHQESMNTGTL). Basic residues predominate over residues 510-524 (GRARRSKGKNKHSKR).

It belongs to the peptidase C19 family. USP17 subfamily. As to expression, expressed in heart, brain, liver and skeletal muscle.

Its subcellular location is the nucleus. It localises to the nucleolus. The protein resides in the endoplasmic reticulum. It carries out the reaction Thiol-dependent hydrolysis of ester, thioester, amide, peptide and isopeptide bonds formed by the C-terminal Gly of ubiquitin (a 76-residue protein attached to proteins as an intracellular targeting signal).. Functionally, deubiquitinating enzyme that removes conjugated ubiquitin from specific proteins to regulate different cellular processes that may include cell proliferation, progression through the cell cycle, apoptosis, cell migration, and the cellular response to viral infection. The polypeptide is Ubiquitin carboxyl-terminal hydrolase 17-like protein 24 (USP17L24) (Homo sapiens (Human)).